A 277-amino-acid polypeptide reads, in one-letter code: Putative phosphoenolpyruvate synthase regulatory protein (277 aa).

157–164 contributes to the ADP binding site; sequence GVSRCGKT.

Belongs to the pyruvate, phosphate/water dikinase regulatory protein family. PSRP subfamily.

The enzyme catalyses [pyruvate, water dikinase] + ADP = [pyruvate, water dikinase]-phosphate + AMP + H(+). It catalyses the reaction [pyruvate, water dikinase]-phosphate + phosphate + H(+) = [pyruvate, water dikinase] + diphosphate. Its function is as follows. Bifunctional serine/threonine kinase and phosphorylase involved in the regulation of the phosphoenolpyruvate synthase (PEPS) by catalyzing its phosphorylation/dephosphorylation. This chain is Putative phosphoenolpyruvate synthase regulatory protein, found in Citrobacter koseri (strain ATCC BAA-895 / CDC 4225-83 / SGSC4696).